The following is a 556-amino-acid chain: CDP-diacylglycerol--glycerol-3-phosphate 3-phosphatidyltransferase, mitochondrial (556 aa).

A mitochondrion-targeting transit peptide spans 1 to 28 (MAAAAAAAAGPVFWRRLLGLLPGRPGLA). At S49 the chain carries Phosphoserine. 124–131 (ASLYLGIG) serves as a coordination point for ATP. 2 PLD phosphodiesterase domains span residues 215-241 (TIGLQHIKVYLFDNNVILSGANLSDSY) and 419-457 (FGAKGVAGAIPAAYVHIERQFYSEVCSLGQQERVQLQEY). Catalysis depends on residues H220, K222, and D227.

It belongs to the CDP-alcohol phosphatidyltransferase class-II family.

The protein resides in the mitochondrion. The catalysed reaction is a CDP-1,2-diacyl-sn-glycerol + sn-glycerol 3-phosphate = a 1,2-diacyl-sn-glycero-3-phospho-(1'-sn-glycero-3'-phosphate) + CMP + H(+). It participates in phospholipid metabolism; phosphatidylglycerol biosynthesis; phosphatidylglycerol from CDP-diacylglycerol: step 1/2. Its activity is regulated as follows. Activated by calcium and magnesium and inhibited by other bivalent cations. Functionally, functions in the biosynthesis of the anionic phospholipids phosphatidylglycerol and cardiolipin. This is CDP-diacylglycerol--glycerol-3-phosphate 3-phosphatidyltransferase, mitochondrial (PGS1) from Bos taurus (Bovine).